The primary structure comprises 572 residues: Arginine--tRNA ligase (572 aa).

Residues 121 to 131 (PNLAKEMHVGH) carry the 'HIGH' region motif.

Belongs to the class-I aminoacyl-tRNA synthetase family. Monomer.

The protein localises to the cytoplasm. It carries out the reaction tRNA(Arg) + L-arginine + ATP = L-arginyl-tRNA(Arg) + AMP + diphosphate. This is Arginine--tRNA ligase from Chromobacterium violaceum (strain ATCC 12472 / DSM 30191 / JCM 1249 / CCUG 213 / NBRC 12614 / NCIMB 9131 / NCTC 9757 / MK).